A 120-amino-acid chain; its full sequence is Small ribosomal subunit protein bS6 (120 aa).

Polar residues predominate over residues serine 97–threonine 112. The interval serine 97 to asparagine 120 is disordered.

This sequence belongs to the bacterial ribosomal protein bS6 family.

Functionally, binds together with bS18 to 16S ribosomal RNA. This Rickettsia bellii (strain OSU 85-389) protein is Small ribosomal subunit protein bS6.